Reading from the N-terminus, the 348-residue chain is Erythronate-4-phosphate dehydrogenase (348 aa).

Substrate contacts are provided by threonine 46 and threonine 67. Aspartate 147 is an NAD(+) binding site. Arginine 209 is an active-site residue. Aspartate 233 provides a ligand contact to NAD(+). Glutamate 238 is an active-site residue. Catalysis depends on histidine 255, which acts as the Proton donor. Glycine 258 is a binding site for NAD(+). Tyrosine 259 is a binding site for substrate.

Belongs to the D-isomer specific 2-hydroxyacid dehydrogenase family. PdxB subfamily. Homodimer.

The protein resides in the cytoplasm. It catalyses the reaction 4-phospho-D-erythronate + NAD(+) = (R)-3-hydroxy-2-oxo-4-phosphooxybutanoate + NADH + H(+). Its pathway is cofactor biosynthesis; pyridoxine 5'-phosphate biosynthesis; pyridoxine 5'-phosphate from D-erythrose 4-phosphate: step 2/5. Functionally, catalyzes the oxidation of erythronate-4-phosphate to 3-hydroxy-2-oxo-4-phosphonooxybutanoate. The protein is Erythronate-4-phosphate dehydrogenase of Bacteroides fragilis (strain ATCC 25285 / DSM 2151 / CCUG 4856 / JCM 11019 / LMG 10263 / NCTC 9343 / Onslow / VPI 2553 / EN-2).